We begin with the raw amino-acid sequence, 639 residues long: 1-deoxy-D-xylulose-5-phosphate synthase (639 aa).

Thiamine diphosphate-binding positions include H79 and 120–122 (GHS). Residue D151 coordinates Mg(2+). Thiamine diphosphate contacts are provided by residues 152-153 (GS), N180, Y289, and E371. Position 180 (N180) interacts with Mg(2+).

Belongs to the transketolase family. DXPS subfamily. As to quaternary structure, homodimer. Mg(2+) is required as a cofactor. Thiamine diphosphate serves as cofactor.

It catalyses the reaction D-glyceraldehyde 3-phosphate + pyruvate + H(+) = 1-deoxy-D-xylulose 5-phosphate + CO2. It participates in metabolic intermediate biosynthesis; 1-deoxy-D-xylulose 5-phosphate biosynthesis; 1-deoxy-D-xylulose 5-phosphate from D-glyceraldehyde 3-phosphate and pyruvate: step 1/1. Catalyzes the acyloin condensation reaction between C atoms 2 and 3 of pyruvate and glyceraldehyde 3-phosphate to yield 1-deoxy-D-xylulose-5-phosphate (DXP). The chain is 1-deoxy-D-xylulose-5-phosphate synthase from Agrobacterium fabrum (strain C58 / ATCC 33970) (Agrobacterium tumefaciens (strain C58)).